A 207-amino-acid polypeptide reads, in one-letter code: Ribosomal RNA large subunit methyltransferase E (207 aa).

5 residues coordinate S-adenosyl-L-methionine: Gly60, Trp62, Asp80, Asp96, and Asp121. Residue Lys161 is the Proton acceptor of the active site.

This sequence belongs to the class I-like SAM-binding methyltransferase superfamily. RNA methyltransferase RlmE family.

The protein resides in the cytoplasm. It catalyses the reaction uridine(2552) in 23S rRNA + S-adenosyl-L-methionine = 2'-O-methyluridine(2552) in 23S rRNA + S-adenosyl-L-homocysteine + H(+). Its function is as follows. Specifically methylates the uridine in position 2552 of 23S rRNA at the 2'-O position of the ribose in the fully assembled 50S ribosomal subunit. In Ectopseudomonas mendocina (strain ymp) (Pseudomonas mendocina), this protein is Ribosomal RNA large subunit methyltransferase E.